Reading from the N-terminus, the 672-residue chain is uncharacterized protein (672 aa).

Residues 1-10 (MAKSDGDDPL) are compositionally biased toward basic and acidic residues. The interval 1–41 (MAKSDGDDPLRPASPRLRSSRRHSLRYSAYTGGPDPLAPPV) is disordered.

This is an uncharacterized protein from Mycobacterium bovis (strain ATCC BAA-935 / AF2122/97).